Consider the following 691-residue polypeptide: POU domain, class 6, transcription factor 2 (691 aa).

A compositionally biased stretch (basic and acidic residues) spans 25 to 36 (MNAELRGEDKAA). 3 disordered regions span residues 25–93 (MNAE…PVGP), 186–297 (LQQQ…LQLV), and 435–461 (SQAS…SALS). Over residues 186–195 (LQQQQQQQQQ) the composition is skewed to low complexity. Residues 196–210 (QPPPSTNQHPQPAPQ) are compositionally biased toward pro residues. Residues 211–220 (APSQSQQQPL) are compositionally biased toward low complexity. Pro residues predominate over residues 221 to 238 (QPTPPQQPPPASQQPPAP). Composition is skewed to low complexity over residues 239-280 (TSQL…SQSP) and 438-461 (SMSQ…SALS). Residues 476 to 586 (VDGVNLEEIR…VLERWMAEAE (111 aa)) form the POU-specific domain. The homeobox DNA-binding region spans 607–666 (KRKRRTSFTPQALEILNAHFEKNTHPSGQEMTEIAEKLNYDREVVRVWFCNKRQALKNTI).

The protein belongs to the POU transcription factor family. Class-6 subfamily. Expressed only within the CNS, where its expression is restricted to the medical habenulla, to a dispersed population of neurons in the dorsal hypothalamus, and to subsets of ganglion and amacrine cells in the retina.

The protein localises to the nucleus. In terms of biological role, probable transcription factor likely to be involved in early steps in the differentiation of amacrine and ganglion cells. Recognizes and binds to the DNA sequence 5'-ATGCAAAT-3'. Isoform 1 does not bind DNA. This Homo sapiens (Human) protein is POU domain, class 6, transcription factor 2 (POU6F2).